The sequence spans 99 residues: Nucleoid-associated protein SUB1611 (99 aa).

It belongs to the YbaB/EbfC family. In terms of assembly, homodimer.

The protein resides in the cytoplasm. Its subcellular location is the nucleoid. Its function is as follows. Binds to DNA and alters its conformation. May be involved in regulation of gene expression, nucleoid organization and DNA protection. The chain is Nucleoid-associated protein SUB1611 from Streptococcus uberis (strain ATCC BAA-854 / 0140J).